The following is a 275-amino-acid chain: Translation initiation factor 2 subunit alpha (275 aa).

The S1 motif domain occupies 12 to 83 (GEFVIATVKS…NKGHIDLSLK (72 aa)).

Belongs to the eIF-2-alpha family. In terms of assembly, heterotrimer composed of an alpha, a beta and a gamma chain.

Functionally, eIF-2 functions in the early steps of protein synthesis by forming a ternary complex with GTP and initiator tRNA. The chain is Translation initiation factor 2 subunit alpha from Thermococcus onnurineus (strain NA1).